The chain runs to 570 residues: Proline--tRNA ligase (570 aa).

This sequence belongs to the class-II aminoacyl-tRNA synthetase family. ProS type 1 subfamily. Homodimer.

The protein localises to the cytoplasm. The enzyme catalyses tRNA(Pro) + L-proline + ATP = L-prolyl-tRNA(Pro) + AMP + diphosphate. In terms of biological role, catalyzes the attachment of proline to tRNA(Pro) in a two-step reaction: proline is first activated by ATP to form Pro-AMP and then transferred to the acceptor end of tRNA(Pro). As ProRS can inadvertently accommodate and process non-cognate amino acids such as alanine and cysteine, to avoid such errors it has two additional distinct editing activities against alanine. One activity is designated as 'pretransfer' editing and involves the tRNA(Pro)-independent hydrolysis of activated Ala-AMP. The other activity is designated 'posttransfer' editing and involves deacylation of mischarged Ala-tRNA(Pro). The misacylated Cys-tRNA(Pro) is not edited by ProRS. This chain is Proline--tRNA ligase, found in Thermoanaerobacter sp. (strain X514).